The following is a 460-amino-acid chain: CUGBP Elav-like family member 6 (460 aa).

Residues 1–10 are compositionally biased toward low complexity; that stretch reads MAAAPGGSAP. Residues 1–37 are disordered; the sequence is MAAAPGGSAPPAGPSPRLAFSTADSGGGMSGLNPGPA. RRM domains follow at residues 46–127 and 134–214; these read IKLF…PAAS and RKLF…LADT. Residues 316–336 form a disordered region; that stretch reads NGFGSLTPQSNGQPGSDTLYN. Positions 319-336 are enriched in polar residues; that stretch reads GSLTPQSNGQPGSDTLYN. Residues 375–453 enclose the RRM 3 domain; that stretch reads CNLFIYHLPQ…KRLKVQLKRP (79 aa).

The protein belongs to the CELF/BRUNOL family.

It is found in the nucleus. The protein resides in the cytoplasm. RNA-binding protein implicated in the regulation of pre-mRNA alternative splicing. Mediates exon inclusion and/or exclusion in pre-mRNA that are subject to tissue-specific and developmentally regulated alternative splicing. Specifically activates exon 5 inclusion of TNNT2 in a muscle-specific splicing enhancer (MSE)-dependent manner. Promotes also exon exclusion of INSR pre-mRNA. This chain is CUGBP Elav-like family member 6 (Celf6), found in Mus musculus (Mouse).